The chain runs to 57 residues: Non-structural protein 3a (57 aa).

The N-terminal stretch at 1-23 (MIQSPTSFLIVLILLWCKLVLSC) is a signal peptide.

Its function is as follows. Involved in resistance to IFN. In Avian infectious bronchitis virus (strain Beaudette) (IBV), this protein is Non-structural protein 3a.